Consider the following 56-residue polypeptide: Large ribosomal subunit protein bL33A (56 aa).

Belongs to the bacterial ribosomal protein bL33 family.

This chain is Large ribosomal subunit protein bL33A, found in Cutibacterium acnes (strain DSM 16379 / KPA171202) (Propionibacterium acnes).